The chain runs to 360 residues: Luc7-like protein (360 aa).

A coiled-coil region spans residues 143–206 (KEQNSKITEL…QEKNENKRMS (64 aa)). Positions 255 to 360 (LGRTDFYNAP…DDRRKRDRNY (106 aa)) are disordered. Basic and acidic residues predominate over residues 269–293 (DSYRDDRRSSSSSYHDIDGRRDHRY). Residues 312–321 (NNGRGSSRDN) are compositionally biased toward low complexity. Positions 329–360 (RDYRNDHGKDYDRKRERDYYNDDDRRKRDRNY) are enriched in basic and acidic residues.

This sequence belongs to the Luc7 family.

Its subcellular location is the nucleus. May play a role in RNA splicing. The sequence is that of Luc7-like protein (crop) from Dictyostelium discoideum (Social amoeba).